The primary structure comprises 38 residues: Large ribosomal subunit protein bL36 (38 aa).

The protein belongs to the bacterial ribosomal protein bL36 family.

The polypeptide is Large ribosomal subunit protein bL36 (Chlorobium phaeobacteroides (strain BS1)).